A 399-amino-acid polypeptide reads, in one-letter code: Coiled-coil domain-containing protein 85C-B (399 aa).

2 coiled-coil regions span residues 52–84 (NRSL…ELCC) and 113–144 (KEVS…DIIL). The tract at residues 151–199 (NGAGSRSSIDSQSSLSNLNGGSGTVRDVGDGSSTSSGGSAGSPDHHHNH) is disordered. The segment covering 155–169 (SRSSIDSQSSLSNLN) has biased composition (low complexity).

This sequence belongs to the CCDC85 family.

Its subcellular location is the cell junction. It is found in the tight junction. The protein localises to the adherens junction. May play a role in cell-cell adhesion and epithelium development through its interaction with proteins of the beta-catenin family. May play an important role in cortical development, especially in the maintenance of radial glia. In Danio rerio (Zebrafish), this protein is Coiled-coil domain-containing protein 85C-B (ccdc85cb).